The sequence spans 136 residues: Large-conductance mechanosensitive channel (136 aa).

2 consecutive transmembrane segments (helical) span residues 9–29 (AFAV…GAAF) and 78–98 (FIQT…GVKA).

It belongs to the MscL family. Homopentamer.

Its subcellular location is the cell inner membrane. In terms of biological role, channel that opens in response to stretch forces in the membrane lipid bilayer. May participate in the regulation of osmotic pressure changes within the cell. The polypeptide is Large-conductance mechanosensitive channel (Azotobacter vinelandii (strain DJ / ATCC BAA-1303)).